A 164-amino-acid polypeptide reads, in one-letter code: 3-hydroxyacyl-[acyl-carrier-protein] dehydratase FabZ (164 aa).

Histidine 61 is a catalytic residue.

This sequence belongs to the thioester dehydratase family. FabZ subfamily.

It is found in the cytoplasm. The enzyme catalyses a (3R)-hydroxyacyl-[ACP] = a (2E)-enoyl-[ACP] + H2O. Functionally, involved in unsaturated fatty acids biosynthesis. Catalyzes the dehydration of short chain beta-hydroxyacyl-ACPs and long chain saturated and unsaturated beta-hydroxyacyl-ACPs. The sequence is that of 3-hydroxyacyl-[acyl-carrier-protein] dehydratase FabZ from Ralstonia nicotianae (strain ATCC BAA-1114 / GMI1000) (Ralstonia solanacearum).